The chain runs to 70 residues: Sec-independent protein translocase protein TatA (70 aa).

Residues 1–21 form a helical membrane-spanning segment; it reads MGSFSIWHWLIVLVVVLLIFG. Positions 46–70 are disordered; it reads DAPKISESDKGGHTIDAEVKDKQNS.

Belongs to the TatA/E family. The Tat system comprises two distinct complexes: a TatABC complex, containing multiple copies of TatA, TatB and TatC subunits, and a separate TatA complex, containing only TatA subunits. Substrates initially bind to the TatABC complex, which probably triggers association of the separate TatA complex to form the active translocon.

Its subcellular location is the cell inner membrane. Part of the twin-arginine translocation (Tat) system that transports large folded proteins containing a characteristic twin-arginine motif in their signal peptide across membranes. TatA could form the protein-conducting channel of the Tat system. This chain is Sec-independent protein translocase protein TatA, found in Thiobacillus denitrificans (strain ATCC 25259 / T1).